Reading from the N-terminus, the 120-residue chain is Myohemerythrin (120 aa).

Positions 26, 56, 60, 75, 79, 108, and 113 each coordinate Fe cation.

The protein belongs to the hemerythrin family.

Functionally, myohemerythrin is an oxygen-binding protein found in the retractor muscles of certain worms. The oxygen-binding site contains two iron atoms. The sequence is that of Myohemerythrin from Sipunculus nudus (Sipunculan worm).